Here is a 732-residue protein sequence, read N- to C-terminus: Catalase-peroxidase (732 aa).

The segment at residues 96–219 is a cross-link (tryptophyl-tyrosyl-methioninium (Trp-Tyr) (with M-245)); that stretch reads WHSAGTYRIG…LGAVQMGLIY (124 aa). Residue H97 is the Proton acceptor of the active site. The tryptophyl-tyrosyl-methioninium (Tyr-Met) (with W-96) cross-link spans 219-245; it reads YVNPEGPNGHPDPVASGRDIRETFGRM. H260 contacts heme b.

The protein belongs to the peroxidase family. Peroxidase/catalase subfamily. As to quaternary structure, homodimer or homotetramer. The cofactor is heme b. In terms of processing, formation of the three residue Trp-Tyr-Met cross-link is important for the catalase, but not the peroxidase activity of the enzyme.

The enzyme catalyses H2O2 + AH2 = A + 2 H2O. It catalyses the reaction 2 H2O2 = O2 + 2 H2O. Functionally, bifunctional enzyme with both catalase and broad-spectrum peroxidase activity. The polypeptide is Catalase-peroxidase (Acaryochloris marina (strain MBIC 11017)).